The primary structure comprises 233 residues: Cobalt-containing nitrile hydratase subunit beta (233 aa).

The protein belongs to the nitrile hydratase subunit beta family. In terms of assembly, heterotetramer of two alpha and two beta chains.

The enzyme catalyses an aliphatic primary amide = an aliphatic nitrile + H2O. NHase catalyzes the hydration of various nitrile compounds to the corresponding amides. The chain is Cobalt-containing nitrile hydratase subunit beta from Pseudonocardia thermophila.